The primary structure comprises 342 residues: Heat-inducible transcription repressor HrcA (342 aa).

The protein belongs to the HrcA family.

In terms of biological role, negative regulator of class I heat shock genes (grpE-dnaK-dnaJ and groELS operons). Prevents heat-shock induction of these operons. This is Heat-inducible transcription repressor HrcA from Shouchella clausii (strain KSM-K16) (Alkalihalobacillus clausii).